The sequence spans 432 residues: 3-phosphoshikimate 1-carboxyvinyltransferase (432 aa).

3-phosphoshikimate contacts are provided by Lys-23, Ser-24, and Arg-28. Lys-23 lines the phosphoenolpyruvate pocket. Phosphoenolpyruvate contacts are provided by Gly-95 and Arg-123. Residues Ser-167, Gln-169, Asp-317, and Lys-344 each coordinate 3-phosphoshikimate. Phosphoenolpyruvate is bound at residue Gln-169. The active-site Proton acceptor is the Asp-317. Phosphoenolpyruvate-binding residues include Arg-348 and Arg-390.

It belongs to the EPSP synthase family. In terms of assembly, monomer.

It localises to the cytoplasm. It catalyses the reaction 3-phosphoshikimate + phosphoenolpyruvate = 5-O-(1-carboxyvinyl)-3-phosphoshikimate + phosphate. Its pathway is metabolic intermediate biosynthesis; chorismate biosynthesis; chorismate from D-erythrose 4-phosphate and phosphoenolpyruvate: step 6/7. Catalyzes the transfer of the enolpyruvyl moiety of phosphoenolpyruvate (PEP) to the 5-hydroxyl of shikimate-3-phosphate (S3P) to produce enolpyruvyl shikimate-3-phosphate and inorganic phosphate. In Staphylococcus aureus (strain Newman), this protein is 3-phosphoshikimate 1-carboxyvinyltransferase.